The chain runs to 540 residues: Chaperonin GroEL (540 aa).

ATP is bound by residues 30–33 (TLGP), Lys-51, 87–91 (DGTTT), Gly-415, and Asp-495.

This sequence belongs to the chaperonin (HSP60) family. In terms of assembly, forms a cylinder of 14 subunits composed of two heptameric rings stacked back-to-back. Interacts with the co-chaperonin GroES.

The protein resides in the cytoplasm. The enzyme catalyses ATP + H2O + a folded polypeptide = ADP + phosphate + an unfolded polypeptide.. In terms of biological role, together with its co-chaperonin GroES, plays an essential role in assisting protein folding. The GroEL-GroES system forms a nano-cage that allows encapsulation of the non-native substrate proteins and provides a physical environment optimized to promote and accelerate protein folding. The polypeptide is Chaperonin GroEL (Serratia ficaria).